Reading from the N-terminus, the 471-residue chain is 6-phosphofructo-2-kinase/fructose-2,6-bisphosphatase 1 (471 aa).

N-acetylserine is present on serine 2. Residues 2–250 (SQEMGELTQT…VYYLMNIHVT (249 aa)) form a 6-phosphofructo-2-kinase region. Residue serine 33 is modified to Phosphoserine; by PKA. 49-57 (GLPARGKTY) is a binding site for ATP. Positions 82 and 105 each coordinate beta-D-fructose 6-phosphate. The active site involves aspartate 131. Positions 133 and 139 each coordinate beta-D-fructose 6-phosphate. At serine 141 the chain carries Phosphoserine. The active site involves cysteine 161. ATP is bound at residue 170–175 (NIRQVK). Lysine 175, arginine 196, and tyrosine 200 together coordinate beta-D-fructose 6-phosphate. The segment at 251–471 (PRSIYLCRHG…EALDTVPAHY (221 aa)) is fructose-2,6-bisphosphatase. Arginine 258 is a beta-D-fructose 2,6-bisphosphate binding site. Histidine 259 (tele-phosphohistidine intermediate) is an active-site residue. Beta-D-fructose 2,6-bisphosphate is bound by residues asparagine 265, glycine 271, and arginine 308. Glutamate 328 functions as the Proton donor/acceptor in the catalytic mechanism. 6 residues coordinate beta-D-fructose 2,6-bisphosphate: tyrosine 339, arginine 353, lysine 357, tyrosine 368, glutamine 394, and arginine 398. 350–353 (FALR) provides a ligand contact to ATP. Residues 394-398 (QAVMR) and tyrosine 430 each bind ATP.

This sequence in the C-terminal section; belongs to the phosphoglycerate mutase family. Homodimer. In terms of tissue distribution, liver.

The catalysed reaction is beta-D-fructose 2,6-bisphosphate + H2O = beta-D-fructose 6-phosphate + phosphate. It catalyses the reaction beta-D-fructose 6-phosphate + ATP = beta-D-fructose 2,6-bisphosphate + ADP + H(+). Its activity is regulated as follows. Phosphorylation at Ser-33 inhibits the kinase and activates the bisphosphatase. Functionally, synthesis and degradation of fructose 2,6-bisphosphate. This Bos taurus (Bovine) protein is 6-phosphofructo-2-kinase/fructose-2,6-bisphosphatase 1.